The sequence spans 163 residues: HTH-type transcriptional regulator IscR (163 aa).

The HTH rrf2-type domain occupies 2–131 (RLTSKGRYAV…NNITLGELVN (130 aa)). The H-T-H motif DNA-binding region spans 28-51 (LADISERQGISLSYLEQLFSRLRK). [2Fe-2S] cluster is bound by residues Cys-92, Cys-98, and Cys-104.

[2Fe-2S] cluster serves as cofactor.

Regulates the transcription of several operons and genes involved in the biogenesis of Fe-S clusters and Fe-S-containing proteins. The chain is HTH-type transcriptional regulator IscR from Klebsiella pneumoniae (strain 342).